The sequence spans 539 residues: Protein Wnt-4 (539 aa).

The signal sequence occupies residues 1–21 (MPSPTGVFVLMILTHLSFGLG). Residues 34-77 (QNGDLDSSNPAIHHQQHQQHQQHQQHQQHQSNHNLNNGNMNSTI) form a disordered region. Low complexity predominate over residues 51–74 (QQHQQHQQHQQHQSNHNLNNGNMN). 2 N-linked (GlcNAc...) asparagine glycosylation sites follow: N74 and N284. 5 cysteine pairs are disulfide-bonded: C274-C285, C322-C330, C332-C349, C397-C411, and C399-C406. A lipid anchor (O-palmitoleoyl serine; by PORCN) is attached at S403. Residue N419 is glycosylated (N-linked (GlcNAc...) asparagine). Positions 436-463 (APNQRSMRQVSSSRMKKPKQRRKKPQQS) are disordered. Positions 439–448 (QRSMRQVSSS) are enriched in low complexity. The segment covering 449 to 460 (RMKKPKQRRKKP) has biased composition (basic residues). Cystine bridges form between C478-C497, C486-C492, C496-C538, C512-C529, C514-C526, and C521-C522.

This sequence belongs to the Wnt family. Post-translationally, palmitoleoylated by porcupine. The lipid group functions as a sorting signal, targeting the ligand to polarized vesicles that transport Wnt4 to unique sites at the cell surface. Depalmitoleoylated by notum, leading to inhibit Wnt signaling pathway.

Its subcellular location is the secreted. It is found in the extracellular space. The protein localises to the extracellular matrix. In terms of biological role, binds as a ligand to a family of frizzled seven-transmembrane receptors and acts through a cascade of genes on the nucleus. Acts downstream of homeotic complex genes in the visceral mesoderm and is required for embryonic segmentation. Also required for cell movement and FAK regulation during ovarian morphogenesis. The protein is Protein Wnt-4 (Wnt4) of Drosophila melanogaster (Fruit fly).